A 434-amino-acid chain; its full sequence is 3-phosphoshikimate 1-carboxyvinyltransferase (434 aa).

Lys-22, Ser-23, and Arg-27 together coordinate 3-phosphoshikimate. Lys-22 serves as a coordination point for phosphoenolpyruvate. Residues Gly-93 and Arg-121 each contribute to the phosphoenolpyruvate site. 3-phosphoshikimate is bound by residues Ser-168, Ser-169, Gln-170, Ser-199, Asp-320, and Lys-347. Gln-170 is a phosphoenolpyruvate binding site. The Proton acceptor role is filled by Asp-320. Phosphoenolpyruvate-binding residues include Arg-351, Arg-394, and Lys-419.

This sequence belongs to the EPSP synthase family. As to quaternary structure, monomer.

The protein localises to the cytoplasm. The enzyme catalyses 3-phosphoshikimate + phosphoenolpyruvate = 5-O-(1-carboxyvinyl)-3-phosphoshikimate + phosphate. The protein operates within metabolic intermediate biosynthesis; chorismate biosynthesis; chorismate from D-erythrose 4-phosphate and phosphoenolpyruvate: step 6/7. Catalyzes the transfer of the enolpyruvyl moiety of phosphoenolpyruvate (PEP) to the 5-hydroxyl of shikimate-3-phosphate (S3P) to produce enolpyruvyl shikimate-3-phosphate and inorganic phosphate. The polypeptide is 3-phosphoshikimate 1-carboxyvinyltransferase (Burkholderia cenocepacia (strain HI2424)).